Reading from the N-terminus, the 132-residue chain is Global transcriptional regulator Spx (132 aa).

A disulfide bridge connects residues cysteine 10 and cysteine 13.

It belongs to the ArsC family. Spx subfamily. As to quaternary structure, interacts with the C-terminal domain of the alpha subunit of the RNAP.

The protein localises to the cytoplasm. Global transcriptional regulator that plays a key role in stress response and exerts either positive or negative regulation of genes. Acts by interacting with the C-terminal domain of the alpha subunit of the RNA polymerase (RNAP). This interaction can enhance binding of RNAP to the promoter region of target genes and stimulate their transcription, or block interaction of RNAP with activator. In Enterococcus faecalis (strain ATCC 700802 / V583), this protein is Global transcriptional regulator Spx.